A 302-amino-acid polypeptide reads, in one-letter code: Probable alpha-L-glutamate ligase 1 (302 aa).

The ATP-grasp domain maps to 104–287 (MQLLSRKGIG…VANMIIEFIE (184 aa)). ATP is bound by residues K141, 178-179 (EY), D187, and 211-213 (RSN). The Mg(2+) site is built by D248, E260, and N262. 3 residues coordinate Mn(2+): D248, E260, and N262.

The protein belongs to the RimK family. Requires Mg(2+) as cofactor. Mn(2+) is required as a cofactor.

This chain is Probable alpha-L-glutamate ligase 1, found in Pseudoalteromonas atlantica (strain T6c / ATCC BAA-1087).